A 502-amino-acid chain; its full sequence is Putative F-box/FBD/LRR-repeat protein At5g22610 (502 aa).

Residues 17-63 enclose the F-box domain; it reads EDLISKLPEVLLSQILSYLPTKDIVRTSVLSKRWKSVWLLIPGLDLD. LRR repeat units follow at residues 70-98, 99-127, 147-180, 181-206, 208-228, 238-263, and 344-373; these read YDTF…KLSI, QKNE…DVEF, CKTL…CLEE, NVYS…TIVK, DDNV…SVGY, YYYD…TFNN, and SVWL…VLET. An FBD domain is found at 384-435; sequence VERRVSSVPECLLSSLEFVEIKNRISVDDGALEVARYFVENSVNLQKVVLRL.

The sequence is that of Putative F-box/FBD/LRR-repeat protein At5g22610 from Arabidopsis thaliana (Mouse-ear cress).